The chain runs to 470 residues: Cupincin (470 aa).

The first 34 residues, 1 to 34, serve as a signal peptide directing secretion; sequence MAKKKTSSSMARSQLAALLISLCFLSLASNAVGW. Residues 36–52 are compositionally biased toward basic and acidic residues; the sequence is RRGEREEEDERRRHGGE. Disordered stretches follow at residues 36 to 59 and 240 to 261; these read RRGE…PYHL and KSCS…PSSL. Cupin type-1 domains lie at 57 to 215 and 259 to 445; these read YHLG…EELE and SSLT…AREA. Asn297 carries N-linked (GlcNAc...) asparagine glycosylation. Positions 330–368 are disordered; sequence PHVSGGGSSERREREREHGRRREEEQGEEEHGERGEKAR. Basic and acidic residues predominate over residues 338–367; that stretch reads SERREREREHGRRREEEQGEEEHGERGEKA. The Zn(2+) site is built by His347, Glu352, and His360.

Belongs to the 7S seed storage protein family. In terms of assembly, homotrimer. Requires Zn(2+) as cofactor.

Its subcellular location is the secreted. In terms of biological role, seed storage protein. Globulin-like protein that acts as a zinc metalloprotease. Cleaves specifically between Leu-15 and Tyr-16 of insulin B chain, and Gln-1 and Leu-2 of neurotensin (NT) peptide in vitro. May play a role as an initiating endopeptidase in germinating seeds. This is Cupincin from Oryza sativa subsp. japonica (Rice).